Reading from the N-terminus, the 33-residue chain is GFFALIPKIISSPLFKTLLSAVGSALSSSGGQE.

This sequence belongs to the pardaxin family. As to quaternary structure, monomer. In aqueous solution exists as a tetramer.

Its subcellular location is the secreted. It localises to the target cell membrane. Its function is as follows. Exhibits unusual shark repellent and surfactant properties. Forms voltage-dependent, ion-permeable channels in membranes. At high concentration causes cell membrane lysis. This Pardachirus marmoratus (Finless sole) protein is Pardaxin P-4.